The primary structure comprises 422 residues: Tyrosine--tRNA ligase (422 aa).

Position 35 (Tyr35) interacts with L-tyrosine. The 'HIGH' region motif lies at 40-49 (PTADSLHIGH). Residues Tyr170 and Gln174 each contribute to the L-tyrosine site. Residues 232-236 (KFGKT) carry the 'KMSKS' region motif. Lys235 is a binding site for ATP. The S4 RNA-binding domain occupies 355 to 421 (LTLVDLLVES…GKKKYFLVTY (67 aa)).

The protein belongs to the class-I aminoacyl-tRNA synthetase family. TyrS type 1 subfamily. As to quaternary structure, homodimer.

The protein resides in the cytoplasm. The catalysed reaction is tRNA(Tyr) + L-tyrosine + ATP = L-tyrosyl-tRNA(Tyr) + AMP + diphosphate + H(+). In terms of biological role, catalyzes the attachment of tyrosine to tRNA(Tyr) in a two-step reaction: tyrosine is first activated by ATP to form Tyr-AMP and then transferred to the acceptor end of tRNA(Tyr). The chain is Tyrosine--tRNA ligase from Bacillus pumilus (strain SAFR-032).